Reading from the N-terminus, the 394-residue chain is Cell adhesion molecule 3 (394 aa).

Residues 1–17 (MHHPVILLLCLSSLAGA) form the signal peptide. The Extracellular portion of the chain corresponds to 18-326 (ANLPPEDLSQ…PIPSTSSIDH (309 aa)). One can recognise an Ig-like V-type domain in the interval 22-120 (PEDLSQPVTA…PVRTAKAVVT (99 aa)). Intrachain disulfides connect Cys45/Cys105 and Cys147/Cys204. 2 Ig-like C2-type domains span residues 128–223 (PQVS…HKIQ) and 228–306 (PTAK…TFIT). The segment at 217–240 (SSSHKIQVQYKPTAKIESRPSMPR) is disordered. The segment covering 230–240 (AKIESRPSMPR) has biased composition (basic and acidic residues). An intrachain disulfide couples Cys249 to Cys295. Residues 327–347 (AVIGGVVAVIAFLLFCLLIVL) traverse the membrane as a helical segment. Over 348 to 394 (GRYLIRHKGTYLTHEAKGSDDAPDADTAIINAEGGQGGSDDKKEYFI) the chain is Cytoplasmic. Positions 363–394 (AKGSDDAPDADTAIINAEGGQGGSDDKKEYFI) are disordered.

This sequence belongs to the nectin family.

Its subcellular location is the cell membrane. It is found in the cell junction. Functionally, may be involved in cell-cell adhesion. The protein is Cell adhesion molecule 3 (cadm3) of Xenopus laevis (African clawed frog).